A 275-amino-acid chain; its full sequence is NAD kinase (275 aa).

The active-site Proton acceptor is the Asp66. NAD(+)-binding positions include 66–67 (DG), His71, 135–136 (NE), Lys146, Arg163, Asp165, and 176–181 (TAYAMS).

The protein belongs to the NAD kinase family. Requires a divalent metal cation as cofactor.

It is found in the cytoplasm. The catalysed reaction is NAD(+) + ATP = ADP + NADP(+) + H(+). Involved in the regulation of the intracellular balance of NAD and NADP, and is a key enzyme in the biosynthesis of NADP. Catalyzes specifically the phosphorylation on 2'-hydroxyl of the adenosine moiety of NAD to yield NADP. In Methanosphaera stadtmanae (strain ATCC 43021 / DSM 3091 / JCM 11832 / MCB-3), this protein is NAD kinase.